The chain runs to 380 residues: 1-deoxy-D-xylulose 5-phosphate reductoisomerase (380 aa).

Residues Thr-10, Gly-11, Ser-12, Ile-13, Gly-36, Arg-37, Asn-38, and Asn-120 each contribute to the NADPH site. Lys-121 provides a ligand contact to 1-deoxy-D-xylulose 5-phosphate. Glu-122 contributes to the NADPH binding site. Residue Asp-146 coordinates Mn(2+). Ser-147, Glu-148, Ser-172, and His-195 together coordinate 1-deoxy-D-xylulose 5-phosphate. Position 148 (Glu-148) interacts with Mn(2+). Gly-201 provides a ligand contact to NADPH. 1-deoxy-D-xylulose 5-phosphate contacts are provided by Ser-208, Asn-213, Lys-214, and Glu-217. Glu-217 serves as a coordination point for Mn(2+).

The protein belongs to the DXR family. Mg(2+) is required as a cofactor. Mn(2+) serves as cofactor.

The catalysed reaction is 2-C-methyl-D-erythritol 4-phosphate + NADP(+) = 1-deoxy-D-xylulose 5-phosphate + NADPH + H(+). Its pathway is isoprenoid biosynthesis; isopentenyl diphosphate biosynthesis via DXP pathway; isopentenyl diphosphate from 1-deoxy-D-xylulose 5-phosphate: step 1/6. Its function is as follows. Catalyzes the NADPH-dependent rearrangement and reduction of 1-deoxy-D-xylulose-5-phosphate (DXP) to 2-C-methyl-D-erythritol 4-phosphate (MEP). The polypeptide is 1-deoxy-D-xylulose 5-phosphate reductoisomerase (Listeria monocytogenes serotype 4b (strain F2365)).